The following is a 647-amino-acid chain: DNA mismatch repair protein MutL (647 aa).

Belongs to the DNA mismatch repair MutL/HexB family.

Its function is as follows. This protein is involved in the repair of mismatches in DNA. It is required for dam-dependent methyl-directed DNA mismatch repair. May act as a 'molecular matchmaker', a protein that promotes the formation of a stable complex between two or more DNA-binding proteins in an ATP-dependent manner without itself being part of a final effector complex. The sequence is that of DNA mismatch repair protein MutL from Bacillus cereus (strain 03BB102).